Consider the following 370-residue polypeptide: Ubiquinone biosynthesis O-methyltransferase, mitochondrial (370 aa).

The N-terminal 86 residues, 1–86, are a transit peptide targeting the mitochondrion; sequence MWRGGRLGSR…TYRTPWKRLY (86 aa). An S-adenosyl-L-methionine-binding site is contributed by Arg125. Residues Lys144 and Lys150 each carry the N6-acetyllysine modification. S-adenosyl-L-methionine is bound by residues Gly155 and Asp176. Lys197 carries the N6-acetyllysine modification. Ser223 lines the S-adenosyl-L-methionine pocket. Glu224, Glu227, and His228 together coordinate Mg(2+). Positions 336-370 are disordered; it reads AQEHQEPAESALKGETGALHANTSGSPSVREEQRT.

Belongs to the class I-like SAM-binding methyltransferase superfamily. UbiG/COQ3 family. Component of a multi-subunit COQ enzyme complex, composed of at least COQ3, COQ4, COQ5, COQ6, COQ7 and COQ9. It depends on Mg(2+) as a cofactor.

It is found in the mitochondrion inner membrane. It carries out the reaction 3,4-dihydroxy-5-(all-trans-decaprenyl)benzoate + S-adenosyl-L-methionine = 4-hydroxy-3-methoxy-5-(all-trans-decaprenyl)benzoate + S-adenosyl-L-homocysteine + H(+). It catalyses the reaction a 3-demethylubiquinone + S-adenosyl-L-methionine = a ubiquinone + S-adenosyl-L-homocysteine. The enzyme catalyses 3-demethylubiquinol-10 + S-adenosyl-L-methionine = ubiquinol-10 + S-adenosyl-L-homocysteine + H(+). It functions in the pathway cofactor biosynthesis; ubiquinone biosynthesis. Functionally, O-methyltransferase required for two non-consecutive steps during ubiquinone biosynthesis. Catalyzes the 2 O-methylation of 3,4-dihydroxy-5-(all-trans-decaprenyl)benzoic acid into 4-hydroxy-3-methoxy-5-(all-trans-decaprenyl)benzoic acid. Also catalyzes the last step of ubiquinone biosynthesis by mediating methylation of 3-demethylubiquinone into ubiquinone. Also able to mediate the methylation of 3-demethylubiquinol-10 into ubiquinol-10. The protein is Ubiquinone biosynthesis O-methyltransferase, mitochondrial of Mus musculus (Mouse).